We begin with the raw amino-acid sequence, 244 residues long: Putative ABC transporter ATP-binding protein gll0289 (244 aa).

One can recognise an ABC transporter domain in the interval 5–237 (LVVEELHYSY…RVLLETHGLE (233 aa)). 38-45 (GPNGSGKS) contacts ATP.

This sequence belongs to the ABC transporter superfamily.

The protein resides in the cell inner membrane. Probably part of an ABC transporter complex. Responsible for energy coupling to the transport system. The sequence is that of Putative ABC transporter ATP-binding protein gll0289 from Gloeobacter violaceus (strain ATCC 29082 / PCC 7421).